The chain runs to 402 residues: Phosphoglycerate kinase (402 aa).

Residues 24–26 (DLN), Arg-39, 62–65 (HLGR), Arg-121, and Arg-161 contribute to the substrate site. ATP is bound by residues Lys-211, Gly-299, Glu-330, and 359-362 (GGDS).

This sequence belongs to the phosphoglycerate kinase family. Monomer.

It localises to the cytoplasm. The catalysed reaction is (2R)-3-phosphoglycerate + ATP = (2R)-3-phospho-glyceroyl phosphate + ADP. The protein operates within carbohydrate degradation; glycolysis; pyruvate from D-glyceraldehyde 3-phosphate: step 2/5. In Corynebacterium urealyticum (strain ATCC 43042 / DSM 7109), this protein is Phosphoglycerate kinase.